A 618-amino-acid chain; its full sequence is DNA mismatch repair protein MutL (618 aa).

Over residues 367-381 the composition is skewed to low complexity; the sequence is EPTAAREPATPRYSG. The segment at 367-402 is disordered; the sequence is EPTAAREPATPRYSGGASGGNGGRQSAGGWPHAQPG. Over residues 382 to 392 the composition is skewed to gly residues; it reads GASGGNGGRQS.

Belongs to the DNA mismatch repair MutL/HexB family.

This protein is involved in the repair of mismatches in DNA. It is required for dam-dependent methyl-directed DNA mismatch repair. May act as a 'molecular matchmaker', a protein that promotes the formation of a stable complex between two or more DNA-binding proteins in an ATP-dependent manner without itself being part of a final effector complex. This chain is DNA mismatch repair protein MutL, found in Salmonella heidelberg (strain SL476).